Here is a 128-residue protein sequence, read N- to C-terminus: Nanos homolog 1 (128 aa).

The tract at residues 7–23 (FDSWSDYLGLSSLISRG) is essential for its translational repressor activity. A disordered region spans residues 25–52 (QPQREGERPRWDVLSPASAEPLPSNESV). The segment at 56-110 (GCGFCRSNREALSLYTSHRLRALDGRVLCPVLRGYTCPLCGANGDWAHTMRYCPL) adopts a Nanos-type zinc-finger fold. Cys57, Cys60, His73, Cys84, Cys92, Cys95, His103, and Cys108 together coordinate Zn(2+). Short sequence motifs (C2HC) lie at residues 57–84 (CGFCRSNREALSLYTSHRLRALDGRVLC) and 92–108 (CPLCGANGDWAHTMRYC).

It belongs to the nanos family. Interacts with ccnb1. As to expression, ovary and testis.

It is found in the cytoplasm. The protein resides in the perinuclear region. Acts as a translational repressor. Can mediate repression affecting different steps in the translation process: cap-driven, IRES-driven, polyadenylated RNAs or nonpolyadenylated RNAs. Essential for the development of primordial germ cells (PGCs) by ensuring their proper migration and survival. The chain is Nanos homolog 1 (nanos1) from Xenopus laevis (African clawed frog).